The sequence spans 312 residues: Olfactory receptor 8H3 (312 aa).

Residues 1–26 (MMGRRNDTNVADFILTGLSDSEEVQM) are Extracellular-facing. An N-linked (GlcNAc...) asparagine glycan is attached at Asn-6. The chain crosses the membrane as a helical span at residues 27–47 (ALFMLFLLIYLITMLGNVGML). Residues 48-55 (LIIRLDLQ) lie on the Cytoplasmic side of the membrane. The chain crosses the membrane as a helical span at residues 56–76 (LHTPMYFFLTHLSFIDLSYST). At 77 to 99 (VVTPKTLANLLTSNYISFTGCFA) the chain is on the extracellular side. Residues Cys-97 and Cys-189 are joined by a disulfide bond. The chain crosses the membrane as a helical span at residues 100 to 120 (QMFCFVFLGTAECYLLSSMAY). The Cytoplasmic segment spans residues 121 to 139 (DRYAAICSPLHYTVIMPKR). The helical transmembrane segment at 140-160 (LCLALITGPYVIGFMDSFVNV) threads the bilayer. At 161–197 (VSMSRLHFCDSNIIHHFFCDTSPILALSCTDTDNTEM) the chain is on the extracellular side. Residues 198 to 217 (LIFIIAGSTLMVSLITISAS) traverse the membrane as a helical segment. Topologically, residues 218-237 (YVSILSTILKINSTSGKQKA) are cytoplasmic. Residues 238-258 (FSTCVSHLLGVTIFYGTMIFT) traverse the membrane as a helical segment. Residues 259–271 (YLKPRKSYSLGRD) lie on the Extracellular side of the membrane. The helical transmembrane segment at 272 to 292 (QVAPVFYTIVIPMLNPLIYSL) threads the bilayer. The Cytoplasmic segment spans residues 293-312 (RNREVKNALIRVMQRRQDSR).

It belongs to the G-protein coupled receptor 1 family.

It is found in the cell membrane. Odorant receptor. The polypeptide is Olfactory receptor 8H3 (OR8H3) (Homo sapiens (Human)).